The sequence spans 146 residues: UPF0260 protein Swit_2819 (146 aa).

This sequence belongs to the UPF0260 family.

The sequence is that of UPF0260 protein Swit_2819 from Rhizorhabdus wittichii (strain DSM 6014 / CCUG 31198 / JCM 15750 / NBRC 105917 / EY 4224 / RW1) (Sphingomonas wittichii).